A 570-amino-acid polypeptide reads, in one-letter code: Pleckstrin homology domain-containing family D member 1 (570 aa).

Positions 1–13 (MTTKTTPKELKAK) are enriched in basic and acidic residues. The disordered stretch occupies residues 1–42 (MTTKTTPKELKAKKESKKKGSAPEPPKNGPPRTSPPNTIEKK). The segment covering 23 to 34 (PEPPKNGPPRTS) has biased composition (pro residues). The PH domain occupies 83–192 (GVQNYGILMK…WLKALRSATK (110 aa)). Residues 202-448 (ETMIRELENR…TGAQMTELQE (247 aa)) are a coiled coil. Positions 542–551 (SKRGIRSSFR) are enriched in basic residues. The tract at residues 542-570 (SKRGIRSSFRKKTDSITTQPREKEPLMQL) is disordered. The segment covering 561–570 (PREKEPLMQL) has biased composition (basic and acidic residues).

It belongs to the PLEKHD1 family.

This is Pleckstrin homology domain-containing family D member 1 from Caenorhabditis elegans.